Consider the following 256-residue polypeptide: Tryptophan synthase alpha chain (256 aa).

Catalysis depends on proton acceptor residues glutamate 48 and aspartate 59.

The protein belongs to the TrpA family. In terms of assembly, tetramer of two alpha and two beta chains.

The catalysed reaction is (1S,2R)-1-C-(indol-3-yl)glycerol 3-phosphate + L-serine = D-glyceraldehyde 3-phosphate + L-tryptophan + H2O. The protein operates within amino-acid biosynthesis; L-tryptophan biosynthesis; L-tryptophan from chorismate: step 5/5. Functionally, the alpha subunit is responsible for the aldol cleavage of indoleglycerol phosphate to indole and glyceraldehyde 3-phosphate. This is Tryptophan synthase alpha chain from Caldicellulosiruptor bescii (strain ATCC BAA-1888 / DSM 6725 / KCTC 15123 / Z-1320) (Anaerocellum thermophilum).